The following is an 84-amino-acid chain: Cytochrome b559 subunit alpha (84 aa).

A helical membrane pass occupies residues 21–35 (VIHSITIPSLFIAGW). Histidine 23 is a binding site for heme.

It belongs to the PsbE/PsbF family. As to quaternary structure, heterodimer of an alpha subunit and a beta subunit. PSII is composed of 1 copy each of membrane proteins PsbA, PsbB, PsbC, PsbD, PsbE, PsbF, PsbH, PsbI, PsbJ, PsbK, PsbL, PsbM, PsbT, PsbX, PsbY, PsbZ, Psb30/Ycf12, at least 3 peripheral proteins of the oxygen-evolving complex and a large number of cofactors. It forms dimeric complexes. Heme b is required as a cofactor.

The protein localises to the plastid membrane. In terms of biological role, this b-type cytochrome is tightly associated with the reaction center of photosystem II (PSII). PSII is a light-driven water:plastoquinone oxidoreductase that uses light energy to abstract electrons from H(2)O, generating O(2) and a proton gradient subsequently used for ATP formation. It consists of a core antenna complex that captures photons, and an electron transfer chain that converts photonic excitation into a charge separation. The sequence is that of Cytochrome b559 subunit alpha from Cuscuta gronovii (Common dodder).